The sequence spans 243 residues: Uridylate kinase (243 aa).

12-15 contributes to the ATP binding site; that stretch reads KLSG. Glycine 54 is a binding site for UMP. Residues glycine 55 and arginine 59 each contribute to the ATP site. 135 to 142 contributes to the UMP binding site; sequence TGNPYFTT. Positions 163, 169, and 172 each coordinate ATP.

It belongs to the UMP kinase family. In terms of assembly, homohexamer.

Its subcellular location is the cytoplasm. The enzyme catalyses UMP + ATP = UDP + ADP. It participates in pyrimidine metabolism; CTP biosynthesis via de novo pathway; UDP from UMP (UMPK route): step 1/1. Its activity is regulated as follows. Inhibited by UTP. Catalyzes the reversible phosphorylation of UMP to UDP. The sequence is that of Uridylate kinase from Roseiflexus sp. (strain RS-1).